The following is a 390-amino-acid chain: Chorismate synthase (390 aa).

The NADP(+) site is built by Arg-48 and Arg-54. FMN-binding positions include 125 to 127, 238 to 239, Gly-278, 293 to 297, and Arg-319; these read RSS, NA, and KPTSS. Positions 359–390 are disordered; sequence PRIPGSTTNQIHPVEMQASAPRAEDPEPDESS.

It belongs to the chorismate synthase family. As to quaternary structure, homotetramer. It depends on FMNH2 as a cofactor.

The enzyme catalyses 5-O-(1-carboxyvinyl)-3-phosphoshikimate = chorismate + phosphate. It participates in metabolic intermediate biosynthesis; chorismate biosynthesis; chorismate from D-erythrose 4-phosphate and phosphoenolpyruvate: step 7/7. Functionally, catalyzes the anti-1,4-elimination of the C-3 phosphate and the C-6 proR hydrogen from 5-enolpyruvylshikimate-3-phosphate (EPSP) to yield chorismate, which is the branch point compound that serves as the starting substrate for the three terminal pathways of aromatic amino acid biosynthesis. This reaction introduces a second double bond into the aromatic ring system. This is Chorismate synthase from Nitrosomonas europaea (strain ATCC 19718 / CIP 103999 / KCTC 2705 / NBRC 14298).